The following is a 430-amino-acid chain: S-adenosylmethionine synthase (430 aa).

ATP is bound at residue His14. Asp16 provides a ligand contact to Mg(2+). Residue Glu42 participates in K(+) binding. Residues Glu55 and Gln98 each coordinate L-methionine. Residues Gln98–Arg108 are flexible loop. Residues Asp164–Lys166, Lys254–Phe255, Asp263, Arg269–Lys270, Ala286, and Lys290 contribute to the ATP site. Asp263 serves as a coordination point for L-methionine. L-methionine is bound at residue Lys294.

Belongs to the AdoMet synthase family. Homotetramer; dimer of dimers. Mg(2+) is required as a cofactor. K(+) serves as cofactor.

Its subcellular location is the cytoplasm. The enzyme catalyses L-methionine + ATP + H2O = S-adenosyl-L-methionine + phosphate + diphosphate. Its pathway is amino-acid biosynthesis; S-adenosyl-L-methionine biosynthesis; S-adenosyl-L-methionine from L-methionine: step 1/1. In terms of biological role, catalyzes the formation of S-adenosylmethionine (AdoMet) from methionine and ATP. The overall synthetic reaction is composed of two sequential steps, AdoMet formation and the subsequent tripolyphosphate hydrolysis which occurs prior to release of AdoMet from the enzyme. In Bacteroides fragilis (strain ATCC 25285 / DSM 2151 / CCUG 4856 / JCM 11019 / LMG 10263 / NCTC 9343 / Onslow / VPI 2553 / EN-2), this protein is S-adenosylmethionine synthase.